A 971-amino-acid polypeptide reads, in one-letter code: Exportin-2 (971 aa).

The region spanning 29–102 (AEKFLESVEG…KANIVNLMLS (74 aa)) is the Importin N-terminal domain.

Belongs to the XPO2/CSE1 family. As to quaternary structure, interacts with cftr.

Its subcellular location is the cytoplasm. It is found in the nucleus. Functionally, export receptor for importin alpha. Mediates importin-alpha re-export from the nucleus to the cytoplasm after import substrates have been released into the nucleoplasm. Negatively regulates fluid secretion and plays a role in fluid homeostasis by down-regulating cftr activity. This chain is Exportin-2 (cse1l), found in Pagrus major (Red sea bream).